Consider the following 120-residue polypeptide: Protein crumbs homolog 3 (120 aa).

Residues 1-26 form the signal peptide; it reads MANPGLGLLLALGLPFLLARWGRAWG. Residues 27 to 59 lie on the Extracellular side of the membrane; the sequence is QIQTTSANENSTVLPSSTSSSSDGNLRPEAITA. N36 carries N-linked (GlcNAc...) asparagine glycosylation. The helical transmembrane segment at 60–80 threads the bilayer; it reads IIVVFSLLAALLLAVGLALLV. Topologically, residues 81 to 120 are cytoplasmic; that stretch reads RKLREKRQTEGTYRPSSEEQVGARVPPTPNLKLPPEERLI. The interval 84–120 is interaction with EPB41L5; that stretch reads REKRQTEGTYRPSSEEQVGARVPPTPNLKLPPEERLI. Residues 87–120 form a disordered region; it reads RQTEGTYRPSSEEQVGARVPPTPNLKLPPEERLI. The segment covering 90 to 99 has biased composition (polar residues); sequence EGTYRPSSEE. The short motif at 117–120 is the PDZ-binding element; that stretch reads ERLI.

Component of a complex composed of CRB3, PALS1 and PATJ. Interacts (via C-terminus) with PALS1 (via PDZ domain). Interacts with PARD6A. Interacts (via intracellular domain) with EPB41L5. Interacts with WDR83. As to expression, preferentially expressed in epithelial tissues. Expressed at high levels in lung, kidney, and colon. Expressed at high levels in retina, colon and mammary glands. Moderately expressed in liver, spleen, pancreas and prostate. Moderately to weakly expressed in the placenta. Weakly expressed in skeletal muscle and small intestine.

Its subcellular location is the apical cell membrane. The protein resides in the cell junction. It localises to the tight junction. In terms of biological role, involved in the establishment of cell polarity in mammalian epithelial cells. Regulates the morphogenesis of tight junctions. Involved in promoting phosphorylation and cytoplasmic retention of transcriptional coactivators YAP1 and WWTR1/TAZ which leads to suppression of TGFB1-dependent transcription of target genes such as CCN2/CTGF, SERPINE1/PAI1, SNAI1/SNAIL1 and SMAD7. The protein is Protein crumbs homolog 3 of Homo sapiens (Human).